Reading from the N-terminus, the 203-residue chain is Large ribosomal subunit protein bL25 (203 aa).

The protein belongs to the bacterial ribosomal protein bL25 family. CTC subfamily. In terms of assembly, part of the 50S ribosomal subunit; part of the 5S rRNA/L5/L18/L25 subcomplex. Contacts the 5S rRNA. Binds to the 5S rRNA independently of L5 and L18.

This is one of the proteins that binds to the 5S RNA in the ribosome where it forms part of the central protuberance. In Pseudomonas savastanoi pv. phaseolicola (strain 1448A / Race 6) (Pseudomonas syringae pv. phaseolicola (strain 1448A / Race 6)), this protein is Large ribosomal subunit protein bL25.